The chain runs to 1117 residues: Sodium-driven chloride bicarbonate exchanger (1117 aa).

2 disordered regions span residues 1–23 (MEIK…EEAV) and 58–97 (GRKS…TPSQ). Residues 1–508 (MEIKDQGAQM…DFRDAFSLQC (508 aa)) lie on the Cytoplasmic side of the membrane. Positions 59–76 (RKSHRRHRHRGHKHRKRD) are enriched in basic residues. S89 bears the Phosphoserine mark. T94 is modified (phosphothreonine). Position 275 is a phosphoserine (S275). Disordered regions lie at residues 282-309 (DFSK…KGPP) and 431-476 (WDPS…PELQ). Residues 509–529 (LASFLFLYCACMSPVITFGGL) traverse the membrane as a helical segment. Residues 530 to 537 (LGEATEGR) are Extracellular-facing. Residues 538–558 (ISAIESLFGASMTGIAYSLFG) traverse the membrane as a helical segment. Residues 559–561 (GQP) are Cytoplasmic-facing. Residues 562 to 582 (LTILGSTGPVLVFEKILFKFC) traverse the membrane as a helical segment. Residues 583–595 (KEYGLSYLSLRAS) lie on the Extracellular side of the membrane. The helical transmembrane segment at 596-616 (IGLWTATLCIILVATDASSLV) threads the bilayer. Over 617–625 (CYITRFTEE) the chain is Cytoplasmic. The chain crosses the membrane as a helical span at residues 626–646 (AFASLICIIFIYEALEKLFEL). The Extracellular portion of the chain corresponds to 647–719 (SESYPINMHN…VGRACGHGHP (73 aa)). 3 N-linked (GlcNAc...) asparagine glycosylation sites follow: N676, N686, and N696. A helical membrane pass occupies residues 720 to 740 (YVPDVLFWSVILFFSTVTMSA). The Cytoplasmic segment spans residues 741–761 (TLKQFKTSRYFPTKVRSIVSD). Residues 762-782 (FAVFLTILCMVLIDYAIGIPS) form a helical membrane-spanning segment. At 783–808 (PKLQVPSVFKPTRDDRGWFVTPLGPN) the chain is on the extracellular side. Residues 809 to 829 (PWWTIIAAIIPALLCTILIFM) traverse the membrane as a helical segment. At 830–854 (DQQITAVIINRKEHKLKKGCGYHLD) the chain is on the cytoplasmic side. A helical membrane pass occupies residues 855–875 (LLMVAVMLGVCSIMGLPWFVA). Residues 876–911 (ATVLSITHVNSLKLESECSAPGEQPKFLGIREQRVT) are Extracellular-facing. The chain crosses the membrane as a helical span at residues 912 to 932 (GLMIFILMGSSVFMTSILKFI). Over 933–934 (PM) the chain is Cytoplasmic. The chain crosses the membrane as a helical span at residues 935–955 (PVLYGVFLYMGASSLKGIQLF). Residues 956–997 (DRIKLFWMPAKHQPDFIYLRHVPLRKVHLFTVIQMSCLGLLW) lie on the Extracellular side of the membrane. The helical transmembrane segment at 998-1018 (IIKVSRAAIVFPMMVLALVFV) threads the bilayer. Topologically, residues 1019–1117 (RKLMDFLFTK…SRFPSKSSPS (99 aa)) are cytoplasmic. Residues S1056 and S1084 each carry the phosphoserine modification.

This sequence belongs to the anion exchanger (TC 2.A.31) family. In terms of processing, N-glycosylated. In the brain, detected in cerebral cortex, subcortex, cerebellum, hippocampus and medulla (at protein level). Expressed in neurons but not in astrocytes (at protein level). Isoforms starting with Met-Glu-Ile-Lys are found predominantly in the brain with lower levels in the eye while isoforms starting with Met-Cys-Asp-Leu are most abundant in the kidney with lower levels in the duodenum, jejunum and ileum (at protein level). In the kidney, isoforms starting with Met-Cys-Asp-Leu are primarily expressed in the cortex, the outer stripe of the outer medulla and the inner stripe of the outer medulla (ISOM) but are not detectable in the inner medulla (IM) while isoforms starting with Met-Glu-Ile-Lys are predominantly expressed in the ISOM and IM. Expressed in the brain, in the hippocampus as well as in dentate gyrus, cortical layers, cerebellum, olfactory bulb and in the epithelial cells of the choroid plexus. Detected in pituitary, testis, kidney and ileum. Detected also in spleen and lung. As to expression, mainly expressed in the jejenum (at protein level).

It is found in the basolateral cell membrane. Its subcellular location is the apical cell membrane. The protein localises to the cell projection. The protein resides in the dendrite. It localises to the axon. It is found in the perikaryon. Its subcellular location is the presynapse. The protein localises to the postsynapse. The catalysed reaction is 2 hydrogencarbonate(out) + chloride(in) + Na(+)(out) = 2 hydrogencarbonate(in) + chloride(out) + Na(+)(in). In terms of biological role, sodium/bicarbonate cotransporter which plays an important role in regulating intracellular pH. Has been shown to act as a sodium/bicarbonate cotransporter in exchange for intracellular chloride. Has also been shown to act as a sodium/biocarbonate cotransporter which does not couple net influx of bicarbonate to net efflux of chloride, with the observed chloride efflux being due to chloride self-exchange. Controls neuronal pH and may contribute to the secretion of cerebrospinal fluid. Acting on presynaptic intracellular pH, it promotes GABA release, reduces the excitability of CA1 pyramidal neurons, and modulates short-term synaptic plasticity. Required in retinal cells to maintain normal pH which is necessary for normal vision. In the kidney, likely to mediate bicarbonate reclamation in the apical membrane of the proximal tubules. Its function is as follows. Sodium/bicarbonate cotransporter which mediates cotransport of sodium and bicarbonate in association with an efflux of intracellular chloride and is involved in NaCl absorption in the small intestine. The sequence is that of Sodium-driven chloride bicarbonate exchanger from Rattus norvegicus (Rat).